A 112-amino-acid polypeptide reads, in one-letter code: Putative galactitol utilization operon repressor (112 aa).

The region spanning 5–60 (SFERRNKIIQLVNEQGTVLVQDLAGVFAASEATIRADLRFLEQKGVVTRFHGGAAK) is the HTH deoR-type domain. Positions 22-41 (VLVQDLAGVFAASEATIRAD) form a DNA-binding region, H-T-H motif.

In terms of biological role, repressor of the gat operon for galacticol transport and metabolism. In K12 strains the operon is constitutively expressed because this gene is inactive. The chain is Putative galactitol utilization operon repressor (gatR) from Escherichia coli (strain K12).